A 604-amino-acid chain; its full sequence is Sulfite reductase [NADPH] flavoprotein alpha-component (604 aa).

In terms of domain architecture, Flavodoxin-like spans 66–204; the sequence is VTVLSASQTG…AANAWTDNIA (139 aa). FMN contacts are provided by residues 72–77, 119–122, and 155–164; these read SQTGNA, STQG, and LGDSSYPNFC. An FAD-binding FR-type domain is found at 239–453; it reads ADPFPAALLA…VERNDGFRLP (215 aa). FAD is bound by residues T327, Q361, 391-394, 409-411, and 424-427; these read RLYS, TVG, and GGAS. Residues 524 to 525, 530 to 534, and D566 each bind NADP(+); these read SR and KIYVQ. An FAD-binding site is contributed by Y604.

The protein belongs to the NADPH-dependent sulphite reductase flavoprotein subunit CysJ family. In the N-terminal section; belongs to the flavodoxin family. This sequence in the C-terminal section; belongs to the flavoprotein pyridine nucleotide cytochrome reductase family. In terms of assembly, alpha(8)-beta(8). The alpha component is a flavoprotein, the beta component is a hemoprotein. FAD serves as cofactor. It depends on FMN as a cofactor.

The catalysed reaction is hydrogen sulfide + 3 NADP(+) + 3 H2O = sulfite + 3 NADPH + 4 H(+). The protein operates within sulfur metabolism; hydrogen sulfide biosynthesis; hydrogen sulfide from sulfite (NADPH route): step 1/1. In terms of biological role, component of the sulfite reductase complex that catalyzes the 6-electron reduction of sulfite to sulfide. This is one of several activities required for the biosynthesis of L-cysteine from sulfate. The flavoprotein component catalyzes the electron flow from NADPH -&gt; FAD -&gt; FMN to the hemoprotein component. This is Sulfite reductase [NADPH] flavoprotein alpha-component from Neisseria meningitidis serogroup C (strain 053442).